A 492-amino-acid chain; its full sequence is Probable cobyric acid synthase (492 aa).

Positions 252-444 (PIEVNIVKFS…FHGILENFEF (193 aa)) constitute a GATase cobBQ-type domain. C330 serves as the catalytic Nucleophile. The active site involves H436.

This sequence belongs to the CobB/CobQ family. CobQ subfamily.

The protein operates within cofactor biosynthesis; adenosylcobalamin biosynthesis. In terms of biological role, catalyzes amidations at positions B, D, E, and G on adenosylcobyrinic A,C-diamide. NH(2) groups are provided by glutamine, and one molecule of ATP is hydrogenolyzed for each amidation. The chain is Probable cobyric acid synthase from Methanococcus maripaludis (strain C5 / ATCC BAA-1333).